The following is a 433-amino-acid chain: Cysteine--tRNA ligase (433 aa).

Zn(2+) is bound at residue C4. The 'HIGH' region motif lies at 6–16; that stretch reads PTVYDTAHIGN. The Zn(2+) site is built by C188, H213, and E217. Residues 246-250 carry the 'KMSKS' region motif; sequence KMSKS. Residue K249 coordinates ATP.

This sequence belongs to the class-I aminoacyl-tRNA synthetase family. As to quaternary structure, monomer. Zn(2+) serves as cofactor.

Its subcellular location is the cytoplasm. The catalysed reaction is tRNA(Cys) + L-cysteine + ATP = L-cysteinyl-tRNA(Cys) + AMP + diphosphate. This chain is Cysteine--tRNA ligase, found in Wolbachia sp. subsp. Brugia malayi (strain TRS).